The primary structure comprises 632 residues: DNA mismatch repair protein MutL (632 aa).

The protein belongs to the DNA mismatch repair MutL/HexB family.

Its function is as follows. This protein is involved in the repair of mismatches in DNA. It is required for dam-dependent methyl-directed DNA mismatch repair. May act as a 'molecular matchmaker', a protein that promotes the formation of a stable complex between two or more DNA-binding proteins in an ATP-dependent manner without itself being part of a final effector complex. The polypeptide is DNA mismatch repair protein MutL (Pseudomonas putida (strain GB-1)).